Reading from the N-terminus, the 178-residue chain is Large ribosomal subunit protein uL5 (178 aa).

The protein belongs to the universal ribosomal protein uL5 family. As to quaternary structure, part of the 50S ribosomal subunit; part of the 5S rRNA/L5/L18/L25 subcomplex. Contacts the 5S rRNA and the P site tRNA. Forms a bridge to the 30S subunit in the 70S ribosome.

Functionally, this is one of the proteins that bind and probably mediate the attachment of the 5S RNA into the large ribosomal subunit, where it forms part of the central protuberance. In the 70S ribosome it contacts protein S13 of the 30S subunit (bridge B1b), connecting the 2 subunits; this bridge is implicated in subunit movement. Contacts the P site tRNA; the 5S rRNA and some of its associated proteins might help stabilize positioning of ribosome-bound tRNAs. In Wolbachia pipientis subsp. Culex pipiens (strain wPip), this protein is Large ribosomal subunit protein uL5.